We begin with the raw amino-acid sequence, 227 residues long: Protein FAM3C (227 aa).

Residues 1-30 (MMRAGGLLKLGVLVSVLFVAVFLAFELLES) form the signal peptide. 2 disulfides stabilise this stretch: Cys58/Cys86 and Cys64/Cys221. In terms of domain architecture, GG-type lectin spans 67–225 (DHFAFKITSG…LEMEGCIPIK (159 aa)).

The protein belongs to the FAM3 family.

Its subcellular location is the secreted. Functionally, involved in retinal laminar formation. The protein is Protein FAM3C (fam3c) of Danio rerio (Zebrafish).